The primary structure comprises 201 residues: Ras-like GTP-binding protein YPT1 (201 aa).

GTP contacts are provided by residues 15–23 (GDSGVGKSC), 33–40 (YTESYIST), 63–67 (DTAGQ), 121–124 (NKSD), and 151–153 (SAK). Positions 37-45 (YISTIGVDF) match the Effector region motif. Residues cysteine 200 and cysteine 201 are each lipidated (S-geranylgeranyl cysteine).

It belongs to the small GTPase superfamily. Rab family.

It is found in the endoplasmic reticulum membrane. It localises to the golgi apparatus membrane. The protein localises to the cytoplasm. Its subcellular location is the preautophagosomal structure membrane. Its activity is regulated as follows. Rab activation is generally mediated by a guanine exchange factor (GEF), while inactivation through hydrolysis of bound GTP is catalyzed by a GTPase activating protein (GAP). Its function is as follows. The small GTPases Rab are key regulators of intracellular membrane trafficking, from the formation of transport vesicles to their fusion with membranes. Rabs cycle between an inactive GDP-bound form and an active GTP-bound form that is able to recruit to membranes different set of downstream effectors directly responsible for vesicle formation, movement, tethering and fusion. YPT1 regulates the trafficking of secretory vesicles from the endoplasmic reticulum (ER) to the Golgi. Plays a role in the initial events of the autophagic vacuole development which take place at specialized regions of the endoplasmic reticulum. Also involved in the recycling of membrane proteins. The chain is Ras-like GTP-binding protein YPT1 (YPT1) from Phytophthora infestans (Potato late blight agent).